Reading from the N-terminus, the 315-residue chain is MSQPTPAVRTFQDLILALQNYWAAQGCVVLQPYDMEVGAGTFHTATFLRAVGPETWNAAYVQPSRRPADGRYGENPNRLQHYYQFQVVLKPNPANFQELYLGSLKAIGLDPLVHDIRFVEDNWESPTLGAWGLGWEIWLNGMEVTQFTYFQQVGGIECYPVTGEITYGLERLAMYIQGVDSVYDLVWADGPFGKVTYGDVFHQNEVEQSTYNFEHANVDKLFELFDFYESEANRLIKLELPLPTYEMVLKASHTFNLLDARRAISVTERQRYILRVRTLARDVAQSYLQARARLGFPMATPELRDEVLAKLEAAQ.

The protein belongs to the class-II aminoacyl-tRNA synthetase family. As to quaternary structure, tetramer of two alpha and two beta subunits.

It localises to the cytoplasm. The catalysed reaction is tRNA(Gly) + glycine + ATP = glycyl-tRNA(Gly) + AMP + diphosphate. The polypeptide is Glycine--tRNA ligase alpha subunit (Pseudomonas putida (strain ATCC 47054 / DSM 6125 / CFBP 8728 / NCIMB 11950 / KT2440)).